A 201-amino-acid chain; its full sequence is L-rhamnose-binding lectin SML (201 aa).

Disulfide bonds link cysteine 10–cysteine 40, cysteine 20–cysteine 99, cysteine 54–cysteine 86, cysteine 67–cysteine 73, cysteine 108–cysteine 138, cysteine 117–cysteine 195, cysteine 152–cysteine 182, and cysteine 163–cysteine 169. 2 SUEL-type lectin domains span residues 18–100 (LSCD…YNCF) and 107–196 (TCEH…YVCQ). The N-linked (GlcNAc...) asparagine glycan is linked to asparagine 168.

Homodimer; non-covalently linked.

Its function is as follows. Rhamnose-binding lectin. Also binds melibiose, raffinose, D-galactose, L-arabinose, D-fucose, maltose and D-glucose with decreasing affinity. Does not bind D-arabinose, L-fucose, lactose, xylose or 2-deoxy-D-galactose. Shows strong hemagglutinating activity against rabbit erythrocytes. The protein is L-rhamnose-binding lectin SML of Scomberomorus niphonius (Japanese Spanish mackerel).